The chain runs to 301 residues: GTPase Era (301 aa).

The 170-residue stretch at 4 to 173 (KAGFVALIGK…LECISEHLSP (170 aa)) folds into the Era-type G domain. The G1 stretch occupies residues 12–19 (GKPNAGKS). 12 to 19 (GKPNAGKS) is a GTP binding site. The segment at 38–42 (NATRK) is G2. Residues 64–67 (DTPG) are G3. Residues 64 to 68 (DTPGL) and 122 to 125 (SKID) each bind GTP. The segment at 122-125 (SKID) is G4. The segment at 152-154 (LSA) is G5. The region spanning 204-280 (LSDEIPYESD…FLNLQVIAQK (77 aa)) is the KH type-2 domain.

The protein belongs to the TRAFAC class TrmE-Era-EngA-EngB-Septin-like GTPase superfamily. Era GTPase family. Monomer.

It localises to the cytoplasm. Its subcellular location is the cell inner membrane. In terms of biological role, an essential GTPase that binds both GDP and GTP, with rapid nucleotide exchange. Plays a role in 16S rRNA processing and 30S ribosomal subunit biogenesis and possibly also in cell cycle regulation and energy metabolism. In Helicobacter acinonychis (strain Sheeba), this protein is GTPase Era.